Consider the following 807-residue polypeptide: Microbial collagenase (807 aa).

A signal peptide spans 1 to 27 (MSHLLPFPRRRLALACLLASISGASFG). His434 is a binding site for Zn(2+). Residue Glu435 is part of the active site. A Zn(2+)-binding site is contributed by His438. The segment at 562 to 585 (EVTPENPDTDPDTPTEPSDGVTQL) is disordered.

Belongs to the peptidase M9A family. It depends on Zn(2+) as a cofactor.

The protein localises to the secreted. It carries out the reaction Digestion of native collagen in the triple helical region at Xaa-|-Gly bonds. With synthetic peptides, a preference is shown for Gly at P3 and P1', Pro and Ala at P2 and P2', and hydroxyproline, Ala or Arg at P3'.. In terms of biological role, possesses gelatinolytic activity. In Vibrio vulnificus (strain CMCP6), this protein is Microbial collagenase.